The chain runs to 447 residues: Phosphatidylinositol N-acetylglucosaminyltransferase subunit A (447 aa).

Topologically, residues 1–387 are cytoplasmic; it reads MAEPPKLRVL…NRSLLERLMR (387 aa). Residues 388–408 traverse the membrane as a helical segment; sequence FLSCGAWAGKLFCMVMILDYL. At 409 to 447 the chain is on the lumenal side; it reads LWRLLQLLQPDEDIEEAPDICLCHHRGVEVSEGLRKKIK.

The protein belongs to the glycosyltransferase group 1 family. Glycosyltransferase 4 subfamily. Expressed in roots, stems, leaves, flowers and pollen grains.

It is found in the endoplasmic reticulum membrane. It carries out the reaction a 1,2-diacyl-sn-glycero-3-phospho-(1D-myo-inositol) + UDP-N-acetyl-alpha-D-glucosamine = a 6-(N-acetyl-alpha-D-glucosaminyl)-1-(1,2-diacyl-sn-glycero-3-phospho)-1D-myo-inositol + UDP + H(+). It functions in the pathway glycolipid biosynthesis; glycosylphosphatidylinositol-anchor biosynthesis. Necessary for the synthesis of N-acetylglucosaminyl-phosphatidylinositol, the very early intermediate in GPI-anchor biosynthesis. Required for pollen germination and pollen tube growth. In Arabidopsis thaliana (Mouse-ear cress), this protein is Phosphatidylinositol N-acetylglucosaminyltransferase subunit A.